The chain runs to 345 residues: tRNA N6-adenosine threonylcarbamoyltransferase (345 aa).

The Fe cation site is built by His-111 and His-115. Substrate contacts are provided by residues 134 to 138 (LVSGG), Asp-167, Gly-180, Asp-184, and Asn-278. A Fe cation-binding site is contributed by Asp-306.

The protein belongs to the KAE1 / TsaD family. Fe(2+) serves as cofactor.

The protein resides in the cytoplasm. It carries out the reaction L-threonylcarbamoyladenylate + adenosine(37) in tRNA = N(6)-L-threonylcarbamoyladenosine(37) in tRNA + AMP + H(+). Functionally, required for the formation of a threonylcarbamoyl group on adenosine at position 37 (t(6)A37) in tRNAs that read codons beginning with adenine. Is involved in the transfer of the threonylcarbamoyl moiety of threonylcarbamoyl-AMP (TC-AMP) to the N6 group of A37, together with TsaE and TsaB. TsaD likely plays a direct catalytic role in this reaction. This is tRNA N6-adenosine threonylcarbamoyltransferase from Cyanothece sp. (strain PCC 7425 / ATCC 29141).